The chain runs to 695 residues: Follicle-stimulating hormone receptor (695 aa).

A signal peptide spans 1–17; sequence MALLLVSLLAFLSLGSG. 2 disulfides stabilise this stretch: cysteine 18–cysteine 25 and cysteine 23–cysteine 32. The LRRNT domain maps to 18–46; the sequence is CHHRICHCSNRVFLCQESKVTEIPSDLPR. At 18-366 the chain is on the extracellular side; the sequence is CHHRICHCSN…EDIMGYNILR (349 aa). 9 LRR repeats span residues 49-72, 73-97, 98-118, 119-143, 144-169, 170-192, 193-216, 217-240, and 241-259; these read IELR…FGDL, EKIE…LPKL, HEIR…AFQN, LPNL…KIHS, LQKV…VGLS, FESV…AFNG, TQLD…VFHG, ASGP…GLEN, and LKKL…PTLE. N-linked (GlcNAc...) asparagine glycosylation is found at asparagine 191 and asparagine 199. 4 cysteine pairs are disulfide-bonded: cysteine 275/cysteine 346, cysteine 276/cysteine 292, cysteine 276/cysteine 356, and cysteine 292/cysteine 338. 2 N-linked (GlcNAc...) asparagine glycosylation sites follow: asparagine 293 and asparagine 318. At tyrosine 335 the chain carries Sulfotyrosine. Residues 367-387 form a helical membrane-spanning segment; that stretch reads VLIWFISILAITGNIIVLVIL. Over 388-398 the chain is Cytoplasmic; the sequence is TTSQYKLTVPR. The chain crosses the membrane as a helical span at residues 399–421; sequence FLMCNLAFADLCIGIYLLLIASV. Residues 422–443 are Extracellular-facing; that stretch reads DIHTKSQYHNYAIDWQTGAGCD. Cysteine 442 and cysteine 517 are disulfide-bonded. A helical membrane pass occupies residues 444-465; sequence AAGFFTVFASELSVYTLTAITL. Over 466 to 485 the chain is Cytoplasmic; sequence ERWHTITHAMQLDCKVQLRH. Residues 486–508 form a helical membrane-spanning segment; sequence AASVMVMGWIFAFAAALFPIFGI. Over 509 to 528 the chain is Extracellular; that stretch reads SSYMKVSICLPMDIDSPLSQ. The helical transmembrane segment at 529–550 threads the bilayer; sequence LYVMSLLVLNVLAFVVICGCYI. Residues 551 to 573 are Cytoplasmic-facing; that stretch reads HIYLTVRNPNIVSSSSDTRIAKR. The chain crosses the membrane as a helical span at residues 574–597; sequence MAMLIFTDFLCMAPISFFAISASL. Topologically, residues 598–608 are extracellular; sequence KVPLITVSKAK. The chain crosses the membrane as a helical span at residues 609-630; sequence ILLVLFHPINSCANPFLYAIFT. The Cytoplasmic portion of the chain corresponds to 631–695; sequence KNFRRDFFIL…LVPLSHLAQN (65 aa).

It belongs to the G-protein coupled receptor 1 family. FSH/LSH/TSH subfamily. As to quaternary structure, homotrimer. Functions as a homotrimer binding the FSH hormone heterodimer composed of CGA and FSHB. Interacts with ARRB2. Interacts with APPL2; interaction is independent of follicle stimulating hormone stimulation. Sulfated. In terms of processing, N-glycosylated; indirectly required for FSH-binding, possibly via a conformational change that allows high affinity binding of hormone. As to expression, sertoli cells and ovarian granulosa cells.

It is found in the cell membrane. Functionally, g protein-coupled receptor for follitropin, the follicle-stimulating hormone. Through cAMP production activates the downstream PI3K-AKT and ERK1/ERK2 signaling pathways. The polypeptide is Follicle-stimulating hormone receptor (FSHR) (Homo sapiens (Human)).